A 141-amino-acid chain; its full sequence is Large-conductance mechanosensitive channel (141 aa).

The next 3 helical transmembrane spans lie at valine 16 to valine 36, leucine 40 to valine 60, and glycine 86 to valine 106.

Belongs to the MscL family. Homopentamer.

The protein localises to the cell inner membrane. Functionally, channel that opens in response to stretch forces in the membrane lipid bilayer. May participate in the regulation of osmotic pressure changes within the cell. This is Large-conductance mechanosensitive channel from Cupriavidus necator (strain ATCC 17699 / DSM 428 / KCTC 22496 / NCIMB 10442 / H16 / Stanier 337) (Ralstonia eutropha).